A 213-amino-acid polypeptide reads, in one-letter code: UPF0319 protein HAPS_0727 (213 aa).

Positions 1–21 are cleaved as a signal peptide; sequence MKLGKIALAMTALIAGTTAFA.

This sequence belongs to the UPF0319 family.

In Glaesserella parasuis serovar 5 (strain SH0165) (Haemophilus parasuis), this protein is UPF0319 protein HAPS_0727.